The sequence spans 801 residues: Phenylalanine--tRNA ligase beta subunit (801 aa).

The tRNA-binding domain maps to 39–148 (AGSFTGVKVG…EDAVIGTDFR (110 aa)). One can recognise a B5 domain in the interval 401 to 476 (PKPNKVALRR…RIYGYDNIPN (76 aa)). Mg(2+)-binding residues include aspartate 454, aspartate 460, glutamate 463, and glutamate 464. Positions 707 to 800 (SKFPSNRRDI…VSEKFGAALR (94 aa)) constitute an FDX-ACB domain.

This sequence belongs to the phenylalanyl-tRNA synthetase beta subunit family. Type 1 subfamily. Tetramer of two alpha and two beta subunits. Mg(2+) serves as cofactor.

The protein resides in the cytoplasm. The catalysed reaction is tRNA(Phe) + L-phenylalanine + ATP = L-phenylalanyl-tRNA(Phe) + AMP + diphosphate + H(+). The protein is Phenylalanine--tRNA ligase beta subunit of Vibrio parahaemolyticus serotype O3:K6 (strain RIMD 2210633).